The sequence spans 62 residues: Large ribosomal subunit protein uL29 (62 aa).

It belongs to the universal ribosomal protein uL29 family.

This Syntrophotalea carbinolica (strain DSM 2380 / NBRC 103641 / GraBd1) (Pelobacter carbinolicus) protein is Large ribosomal subunit protein uL29.